The sequence spans 634 residues: MAMWNRPCQRLPQQPLVAEPTAEGEPHLPTGRELTEANRFAYAALCGISLSQLFPEPEHSSFCTEFMAGLVQWLELSEAVLPTMTAFASGLGGEGADVFVQILLKDPILKDDPTVITQDLLSFSLKDGHYDARARVLVCHMTSLLQVPLEELDVLEEMFLESLKEIKEEESEMAEASRKKKENRRKWKRYLLIGLATVGGGTVIGVTGGLAAPLVAAGAATIIGSAGAAALGSAAGIAIMTSLFGAAGAGLTGYKMKKRVGAIEEFTFLPLTEGRQLHITIAVTGWLASGKYRTFSAPWAALAHSREQYCLAWEAKYLMELGNALETILSGLANMVAQEALKYTVLSGIVAALTWPASLLSVANVIDNPWGVCLHRSAEVGKHLAHILLSRQQGRRPVTLIGFSLGARVIYFCLQEMAQEKDCQGIIEDVILLGAPVEGEAKHWEPFRKVVSGRIINGYCRGDWLLSFVYRTSSVQLRVAGLQPVLLQDRRVENVDLTSVVSGHLDYAKQMDAILKAVGIRTKPGWDEKGLLLAPGCLPSEEPRQAAAAASSGETPHQVGQTQGPISGDTSKLAMSTDPSQAQVPVGLDQSEGASLPAAASPERPPICSHGMDPNPLGCPDCACKTQGPSTGLD.

Residues 150 to 190 (EELDVLEEMFLESLKEIKEEESEMAEASRKKKENRRKWKRY) are a coiled coil. A run of 3 helical transmembrane segments spans residues 203–223 (VIGVTGGLAAPLVAAGAATII), 231–251 (LGSAAGIAIMTSLFGAAGAGL), and 346–366 (LSGIVAALTWPASLLSVANVI). Residues 542 to 612 (EPRQAAAAAS…ERPPICSHGM (71 aa)) are disordered. The segment covering 552 to 583 (SGETPHQVGQTQGPISGDTSKLAMSTDPSQAQ) has biased composition (polar residues).

This sequence belongs to the TMCO4 family.

It localises to the membrane. The chain is Transmembrane and coiled-coil domain-containing protein 4 (TMCO4) from Homo sapiens (Human).